We begin with the raw amino-acid sequence, 403 residues long: Phosphopentomutase (403 aa).

6 residues coordinate Mn(2+): D13, D298, H303, D339, H340, and H351.

The protein belongs to the phosphopentomutase family. Mn(2+) serves as cofactor.

It localises to the cytoplasm. It carries out the reaction 2-deoxy-alpha-D-ribose 1-phosphate = 2-deoxy-D-ribose 5-phosphate. The enzyme catalyses alpha-D-ribose 1-phosphate = D-ribose 5-phosphate. It functions in the pathway carbohydrate degradation; 2-deoxy-D-ribose 1-phosphate degradation; D-glyceraldehyde 3-phosphate and acetaldehyde from 2-deoxy-alpha-D-ribose 1-phosphate: step 1/2. Its function is as follows. Isomerase that catalyzes the conversion of deoxy-ribose 1-phosphate (dRib-1-P) and ribose 1-phosphate (Rib-1-P) to deoxy-ribose 5-phosphate (dRib-5-P) and ribose 5-phosphate (Rib-5-P), respectively. The chain is Phosphopentomutase from Streptococcus thermophilus.